The chain runs to 129 residues: SOSS complex subunit C homolog (129 aa).

The disordered stretch occupies residues 105–129; that stretch reads RLEPLPSPATTPTTPNAPPSHNISK.

It belongs to the SOSS-C family.

The polypeptide is SOSS complex subunit C homolog (Drosophila erecta (Fruit fly)).